The chain runs to 271 residues: N-acetylaspartate synthetase (271 aa).

The disordered stretch occupies residues 1-38; sequence MTYRGTRKSPCCSPPPRCGPPLPSGPAGSALGPPSSGA. The span at 12 to 24 shows a compositional bias: pro residues; the sequence is CSPPPRCGPPLPS. Positions 25–37 are enriched in low complexity; that stretch reads GPAGSALGPPSSG. Residues 89–109 form a helical membrane-spanning segment; that stretch reads VYAVIIIMCFVVTKSLLVTCC. The N-acetyltransferase domain maps to 115-258; the sequence is LGMRYYYSRK…HSLLERLFFQ (144 aa).

The protein belongs to the NAT8 family.

The protein resides in the cytoplasm. It is found in the microsome membrane. It localises to the mitochondrion membrane. The protein localises to the endoplasmic reticulum membrane. It catalyses the reaction L-aspartate + acetyl-CoA = N-acetyl-L-aspartate + CoA + H(+). In terms of biological role, catalyzes the synthesis of N-acetylaspartate acid (NAA) from L-aspartate and acetyl-CoA. The chain is N-acetylaspartate synthetase (nat8l) from Xenopus tropicalis (Western clawed frog).